The sequence spans 535 residues: Bifunctional purine biosynthesis protein PurH (535 aa).

Positions 6–151 (TRLPVRRALI…KNHKDVAIVV (146 aa)) constitute an MGS-like domain.

Belongs to the PurH family.

The catalysed reaction is (6R)-10-formyltetrahydrofolate + 5-amino-1-(5-phospho-beta-D-ribosyl)imidazole-4-carboxamide = 5-formamido-1-(5-phospho-D-ribosyl)imidazole-4-carboxamide + (6S)-5,6,7,8-tetrahydrofolate. It catalyses the reaction IMP + H2O = 5-formamido-1-(5-phospho-D-ribosyl)imidazole-4-carboxamide. Its pathway is purine metabolism; IMP biosynthesis via de novo pathway; 5-formamido-1-(5-phospho-D-ribosyl)imidazole-4-carboxamide from 5-amino-1-(5-phospho-D-ribosyl)imidazole-4-carboxamide (10-formyl THF route): step 1/1. It participates in purine metabolism; IMP biosynthesis via de novo pathway; IMP from 5-formamido-1-(5-phospho-D-ribosyl)imidazole-4-carboxamide: step 1/1. This chain is Bifunctional purine biosynthesis protein PurH, found in Azotobacter vinelandii (strain DJ / ATCC BAA-1303).